A 132-amino-acid polypeptide reads, in one-letter code: Large-conductance mechanosensitive channel (132 aa).

Helical transmembrane passes span 14 to 34 (VIDLAVGVVIGAAFGKIVSSL) and 67 to 87 (GNFIQTIFDFLIIAAAIFMFV).

The protein belongs to the MscL family. Homopentamer.

The protein localises to the cell membrane. Its function is as follows. Channel that opens in response to stretch forces in the membrane lipid bilayer. May participate in the regulation of osmotic pressure changes within the cell. In Bacillus anthracis (strain A0248), this protein is Large-conductance mechanosensitive channel.